The chain runs to 217 residues: 3-isopropylmalate dehydratase small subunit (217 aa).

The protein belongs to the LeuD family. LeuD type 1 subfamily. As to quaternary structure, heterodimer of LeuC and LeuD.

It catalyses the reaction (2R,3S)-3-isopropylmalate = (2S)-2-isopropylmalate. It functions in the pathway amino-acid biosynthesis; L-leucine biosynthesis; L-leucine from 3-methyl-2-oxobutanoate: step 2/4. Catalyzes the isomerization between 2-isopropylmalate and 3-isopropylmalate, via the formation of 2-isopropylmaleate. This chain is 3-isopropylmalate dehydratase small subunit, found in Delftia acidovorans (strain DSM 14801 / SPH-1).